Reading from the N-terminus, the 354-residue chain is Pyruvate dehydrogenase E1 component subunit alpha (354 aa).

The disordered stretch occupies residues 1–29 (MAKATQDSNRPHKADVGSAIPNHDLPPIP).

In terms of assembly, heterodimer of an alpha and a beta chain. It depends on thiamine diphosphate as a cofactor.

It carries out the reaction N(6)-[(R)-lipoyl]-L-lysyl-[protein] + pyruvate + H(+) = N(6)-[(R)-S(8)-acetyldihydrolipoyl]-L-lysyl-[protein] + CO2. Its function is as follows. The pyruvate dehydrogenase complex catalyzes the overall conversion of pyruvate to acetyl-CoA and CO(2). It contains multiple copies of three enzymatic components: pyruvate dehydrogenase (E1), dihydrolipoamide acetyltransferase (E2) and lipoamide dehydrogenase (E3). The protein is Pyruvate dehydrogenase E1 component subunit alpha (pdhA) of Zymomonas mobilis subsp. mobilis (strain ATCC 31821 / ZM4 / CP4).